The following is a 298-amino-acid chain: Cation-efflux pump FieF (298 aa).

Residues Leu-24–Val-44 traverse the membrane as a helical segment. Zn(2+)-binding residues include Asp-45 and Asp-49. A run of 2 helical transmembrane segments spans residues Ser-80 to Ile-100 and Pro-112 to Phe-132. Zn(2+)-binding residues include His-151 and Asp-155. Transmembrane regions (helical) follow at residues Ser-154–His-174 and Ala-176–Gly-196.

The protein belongs to the cation diffusion facilitator (CDF) transporter (TC 2.A.4) family. FieF subfamily. Homodimer.

Its subcellular location is the cell inner membrane. The enzyme catalyses Zn(2+)(in) + H(+)(out) = Zn(2+)(out) + H(+)(in). The catalysed reaction is Cd(2+)(in) + H(+)(out) = Cd(2+)(out) + H(+)(in). It carries out the reaction Fe(2+)(in) + H(+)(out) = Fe(2+)(out) + H(+)(in). In terms of biological role, divalent metal cation transporter which exports Zn(2+), Cd(2+) and possibly Fe(2+). May be involved in zinc and iron detoxification by efflux. This is Cation-efflux pump FieF from Salmonella typhi.